The sequence spans 244 residues: MGCRDVHAATVLSFLCGIASVAGLFAGTLLPNWRKLRLITFNRNEKNLTVYTGLWVKCARYDGSSDCLMYDTTWYSSVDQLDLRVLQFALPLSMLIAMGALLLCLIGMCNTAFRSSVPNIKLAKCLVNSAGCHLVAGLLFFLAGTVSLSPSIWVIFYNIHLNKKFEPVFSFDYAVYVTIASAGGLFMTSLILFIWYCTCKSLPSPFWQPLYSHPPSMHTYSQPYSARSRLSAIEIDIPVVSHTT.

Residues methionine 1–threonine 10 lie on the Cytoplasmic side of the membrane. A helical membrane pass occupies residues valine 11–proline 31. The Extracellular segment spans residues asparagine 32 to glutamine 87. Residues phenylalanine 88–methionine 108 form a helical membrane-spanning segment. The Cytoplasmic segment spans residues cysteine 109–valine 135. Residues alanine 136–phenylalanine 156 traverse the membrane as a helical segment. Over tyrosine 157–alanine 174 the chain is Extracellular. Residues valine 175–tryptophan 195 form a helical membrane-spanning segment. The Cytoplasmic portion of the chain corresponds to tyrosine 196–threonine 244. Residues serine 228 and serine 231 each carry the phosphoserine modification.

Belongs to the claudin family. As to quaternary structure, interacts with OCLN.

The protein resides in the cell junction. The protein localises to the tight junction. It localises to the cell membrane. Plays a major role in tight junction-specific obliteration of the intercellular space, through calcium-independent cell-adhesion activity. The sequence is that of Claudin-12 (CLDN12) from Pongo abelii (Sumatran orangutan).